We begin with the raw amino-acid sequence, 147 residues long: 18 kDa antigen 1 (147 aa).

A sHSP domain is found at 21–131 (TPTRPAVMPM…RPRKIAVGAA (111 aa)).

It belongs to the small heat shock protein (HSP20) family.

Not known. This protein is one of the major immune reactive proteins in mycobacteria. The sequence is that of 18 kDa antigen 1 from Mycobacterium avium.